The chain runs to 155 residues: FHA domain-containing protein FhaB (155 aa).

A helical membrane pass occupies residues 6–28; the sequence is LQLTRAGFLMLLWVFIWSVLRIL. Thr-36 is subject to Phosphothreonine. The 50-residue stretch at 83-132 folds into the FHA domain; that stretch reads VLIGRADDSTLVLTDDYASTRHARLSMRGSEWYVEDLGSTNGTYLDRAKV.

Post-translationally, phosphorylated by PknB. Dephosphorylated by PstP.

The protein resides in the cell membrane. This chain is FHA domain-containing protein FhaB (fhaB), found in Mycobacterium tuberculosis (strain CDC 1551 / Oshkosh).